A 129-amino-acid chain; its full sequence is SOSS complex subunit C homolog (129 aa).

The interval 105–129 (RLEPLPSPATTPTTPNAPPSHSISK) is disordered.

The protein belongs to the SOSS-C family.

In Drosophila simulans (Fruit fly), this protein is SOSS complex subunit C homolog.